Reading from the N-terminus, the 101-residue chain is UPF0235 protein MmarC6_1603 (101 aa).

This sequence belongs to the UPF0235 family.

This Methanococcus maripaludis (strain C6 / ATCC BAA-1332) protein is UPF0235 protein MmarC6_1603.